Reading from the N-terminus, the 499-residue chain is Potassium voltage-gated channel subfamily A member 2 (499 aa).

The interval 1–26 (MTVATGDPADEAAALPGHPQDTYDPE) is disordered. A tetramerization domain region spans residues 1 to 125 (MTVATGDPAD…YELGEEAMEM (125 aa)). Topologically, residues 1–160 (MTVATGDPAD…LLFEYPESSG (160 aa)) are cytoplasmic. Residues 161-182 (PARIIAIVSVMVILISIVSFCL) traverse the membrane as a helical segment. At 183-221 (ETLPIFRDENEDMHGSGVTFHTYSNSTIGYQQSTSFTDP) the chain is on the extracellular side. N-linked (GlcNAc...) asparagine glycosylation occurs at Asn-207. The chain crosses the membrane as a helical span at residues 222-243 (FFIVETLCIIWFSFEFLVRFFA). A lipid anchor (S-palmitoyl cysteine) is attached at Cys-244. The Cytoplasmic segment spans residues 244–254 (CPSKAGFFTNI). Residues 255 to 275 (MNIIDIVAIIPYFITLGTELA) traverse the membrane as a helical segment. The Extracellular segment spans residues 276 to 289 (EKPEDAQQGQQAMS). The chain crosses the membrane as a helical; Voltage-sensor span at residues 290–310 (LAILRVIRLVRVFRIFKLSRH). At 311–325 (SKGLQILGQTLKASM) the chain is on the cytoplasmic side. The S4-S5 linker stretch occupies residues 312-325 (KGLQILGQTLKASM). The chain crosses the membrane as a helical span at residues 326–347 (RELGLLIFFLFIGVILFSSAVY). At 348-361 (FAEADERESQFPSI) the chain is on the extracellular side. Residues 362-373 (PDAFWWAVVSMT) constitute an intramembrane region (helical). The Selectivity filter motif lies at 374-379 (TVGYGD). Residues 374–381 (TVGYGDMV) lie within the membrane without spanning it. Over 382 to 388 (PTTIGGK) the chain is Extracellular. Residues 389–417 (IVGSLCAIAGVLTIALPVPVIVSNFNYFY) traverse the membrane as a helical segment. Residues 418–499 (HRETEGEEQA…VNITKMLTDV (82 aa)) lie on the Cytoplasmic side of the membrane. At Tyr-429 the chain carries Phosphotyrosine. Residues Ser-434, Ser-440, Ser-441, and Ser-449 each carry the phosphoserine modification. Residue Tyr-458 is modified to Phosphotyrosine. Position 468 is a phosphoserine (Ser-468). The PDZ-binding motif lies at 497-499 (TDV).

This sequence belongs to the potassium channel family. A (Shaker) (TC 1.A.1.2) subfamily. Kv1.2/KCNA2 sub-subfamily. As to quaternary structure, homotetramer and heterotetramer with other channel-forming alpha subunits, such as KCNA1, KCNA4, KCNA5, KCNA6 and KCNA7. Channel activity is regulated by interaction with the beta subunits, including KCNAB1 and KCNAB2. Identified in a complex with KCNA1 and KCNAB2. Identified in a complex with KCNA5 and KCNAB1. Identified in a complex with KCNA4 and FYN. Interacts with the beta subunit KCNAB1. Interacts with PTK2B. Interacts (via C-terminus) with CTTN. Interacts (via N-terminal cytoplasmic domain) with RHOA (GTP-bound form); this regulates channel activity by reducing location at the cell surface in response to CHRM1 activation. Interacts with DRD2. Interacts with SIGMAR1; cocaine consumption leads to increased interaction. Interacts with ADAM22. Interacts (via C-terminus) with the PDZ domains of DLG1, DLG2 and DLG4. Interacts with CNTNAP2. Interacts with ADAM11. Interacts with LYNX1. In terms of processing, phosphorylated on tyrosine residues; phosphorylation increases in response to ischemia. Phosphorylated on tyrosine residues by activated PTK2B/PYK2. Phosphorylation on tyrosine residues suppresses ion channel activity. Phosphorylated on tyrosine residues in response to CHRM1 activation; this abolishes interaction with CTTN. This is probably due to endocytosis of the phosphorylated channel subunits. Phosphorylated on serine residues in response to increased cAMP levels; phosphorylation is apparently not catalyzed by PKA. N-glycosylated, with complex, sialylated N-glycans. As to expression, detected in brain cortex. Detected in peroneal nerve in the juxtaparanodal regions of the node of Ranvier; expression is decreased in patients with diabetes mellitus that suffer from axonal neuropathy. Detected in paranodal and juxtanodal zones in myelinated spinal cord (at protein level).

It is found in the cell membrane. It localises to the membrane. Its subcellular location is the cell projection. The protein localises to the axon. The protein resides in the synapse. It is found in the endoplasmic reticulum membrane. It localises to the lamellipodium membrane. Its subcellular location is the synaptosome. The protein localises to the presynaptic cell membrane. The protein resides in the dendrite. It is found in the cell junction. It localises to the paranodal septate junction. The enzyme catalyses K(+)(in) = K(+)(out). Its activity is regulated as follows. Inhibited by 4-aminopyridine (4-AP) and charybdotoxin (CTX), but not by tetraethylammonium (TEA). Inhibited by dendrotoxin (DTX). Inhibited by tityustoxin-K alpha (TsTX-Kalpha), a toxin that is highly specific for KCNA2. Inhibited by maurotoxin. Inhibited by kappaM conotoxins kappaM-RIIIJ and kappaM-RIIIK; kappaM-RIIIJ has much higher affinity for channels containing KCNA2 than kappaM-RIIIK, with the exception of heterodimers formed by KCNA2 and KCNA7 where the opposite is true. Functionally, voltage-gated potassium channel that mediates transmembrane potassium transport in excitable membranes, primarily in the brain and the central nervous system, but also in the cardiovascular system. Prevents aberrant action potential firing and regulates neuronal output. Forms tetrameric potassium-selective channels through which potassium ions pass in accordance with their electrochemical gradient. The channel alternates between opened and closed conformations in response to the voltage difference across the membrane. Can form functional homotetrameric channels and heterotetrameric channels that contain variable proportions of KCNA1, KCNA2, KCNA4, KCNA5, KCNA6, KCNA7, and possibly other family members as well; channel properties depend on the type of alpha subunits that are part of the channel. Channel properties are modulated by cytoplasmic beta subunits that regulate the subcellular location of the alpha subunits and promote rapid inactivation of delayed rectifier potassium channels. In vivo, membranes probably contain a mixture of heteromeric potassium channel complexes, making it difficult to assign currents observed in intact tissues to any particular potassium channel family member. Homotetrameric KCNA2 forms a delayed-rectifier potassium channel that opens in response to membrane depolarization, followed by slow spontaneous channel closure. In contrast, a heteromultimer formed by KCNA2 and KCNA4 shows rapid inactivation. Regulates neuronal excitability and plays a role as pacemaker in the regulation of neuronal action potentials. KCNA2-containing channels play a presynaptic role and prevent hyperexcitability and aberrant action potential firing. Response to toxins that are selective for KCNA2-containing potassium channels suggests that in Purkinje cells, dendritic subthreshold KCNA2-containing potassium channels prevent random spontaneous calcium spikes, suppressing dendritic hyperexcitability without hindering the generation of somatic action potentials, and thereby play an important role in motor coordination. Plays a role in the induction of long-term potentiation of neuron excitability in the CA3 layer of the hippocampus. May function as down-stream effector for G protein-coupled receptors and inhibit GABAergic inputs to basolateral amygdala neurons. May contribute to the regulation of neurotransmitter release, such as gamma-aminobutyric acid (GABA). Contributes to the regulation of the axonal release of the neurotransmitter dopamine. Reduced KCNA2 expression plays a role in the perception of neuropathic pain after peripheral nerve injury, but not acute pain. Plays a role in the regulation of the time spent in non-rapid eye movement (NREM) sleep. The polypeptide is Potassium voltage-gated channel subfamily A member 2 (KCNA2) (Homo sapiens (Human)).